The chain runs to 223 residues: Deoxyribose-phosphate aldolase (223 aa).

Asp91 acts as the Proton donor/acceptor in catalysis. Catalysis depends on Lys153, which acts as the Schiff-base intermediate with acetaldehyde. The active-site Proton donor/acceptor is Lys182.

Belongs to the DeoC/FbaB aldolase family. DeoC type 1 subfamily.

The protein localises to the cytoplasm. It catalyses the reaction 2-deoxy-D-ribose 5-phosphate = D-glyceraldehyde 3-phosphate + acetaldehyde. It functions in the pathway carbohydrate degradation; 2-deoxy-D-ribose 1-phosphate degradation; D-glyceraldehyde 3-phosphate and acetaldehyde from 2-deoxy-alpha-D-ribose 1-phosphate: step 2/2. Functionally, catalyzes a reversible aldol reaction between acetaldehyde and D-glyceraldehyde 3-phosphate to generate 2-deoxy-D-ribose 5-phosphate. The protein is Deoxyribose-phosphate aldolase of Streptococcus pyogenes serotype M2 (strain MGAS10270).